Here is a 202-residue protein sequence, read N- to C-terminus: Imidazole glycerol phosphate synthase subunit HisH 2 (202 aa).

The Glutamine amidotransferase type-1 domain occupies 1–202; it reads MIVVIDYGVG…QLFKNFVELV (202 aa). Cys80 functions as the Nucleophile in the catalytic mechanism. Active-site residues include His183 and Glu185.

Heterodimer of HisH and HisF.

Its subcellular location is the cytoplasm. The catalysed reaction is 5-[(5-phospho-1-deoxy-D-ribulos-1-ylimino)methylamino]-1-(5-phospho-beta-D-ribosyl)imidazole-4-carboxamide + L-glutamine = D-erythro-1-(imidazol-4-yl)glycerol 3-phosphate + 5-amino-1-(5-phospho-beta-D-ribosyl)imidazole-4-carboxamide + L-glutamate + H(+). It catalyses the reaction L-glutamine + H2O = L-glutamate + NH4(+). Its pathway is amino-acid biosynthesis; L-histidine biosynthesis; L-histidine from 5-phospho-alpha-D-ribose 1-diphosphate: step 5/9. Functionally, IGPS catalyzes the conversion of PRFAR and glutamine to IGP, AICAR and glutamate. The HisH subunit catalyzes the hydrolysis of glutamine to glutamate and ammonia as part of the synthesis of IGP and AICAR. The resulting ammonia molecule is channeled to the active site of HisF. This chain is Imidazole glycerol phosphate synthase subunit HisH 2 (hisH2), found in Pseudomonas aeruginosa (strain ATCC 15692 / DSM 22644 / CIP 104116 / JCM 14847 / LMG 12228 / 1C / PRS 101 / PAO1).